We begin with the raw amino-acid sequence, 116 residues long: Large ribosomal subunit protein eL31 (116 aa).

Belongs to the eukaryotic ribosomal protein eL31 family.

The chain is Large ribosomal subunit protein eL31 (RPL31) from Chlamydomonas reinhardtii (Chlamydomonas smithii).